A 513-amino-acid chain; its full sequence is ATP synthase subunit alpha (513 aa).

169–176 (GDRQIGKT) is a binding site for ATP.

The protein belongs to the ATPase alpha/beta chains family. F-type ATPases have 2 components, CF(1) - the catalytic core - and CF(0) - the membrane proton channel. CF(1) has five subunits: alpha(3), beta(3), gamma(1), delta(1), epsilon(1). CF(0) has three main subunits: a(1), b(2) and c(9-12). The alpha and beta chains form an alternating ring which encloses part of the gamma chain. CF(1) is attached to CF(0) by a central stalk formed by the gamma and epsilon chains, while a peripheral stalk is formed by the delta and b chains.

The protein localises to the cell inner membrane. It catalyses the reaction ATP + H2O + 4 H(+)(in) = ADP + phosphate + 5 H(+)(out). Its function is as follows. Produces ATP from ADP in the presence of a proton gradient across the membrane. The alpha chain is a regulatory subunit. This Shewanella piezotolerans (strain WP3 / JCM 13877) protein is ATP synthase subunit alpha.